Reading from the N-terminus, the 287-residue chain is Putative S-adenosyl-L-methionine-dependent methyltransferase SACE_1742 (287 aa).

S-adenosyl-L-methionine contacts are provided by residues D119 and 148 to 149 (DL).

The protein belongs to the UPF0677 family.

Functionally, exhibits S-adenosyl-L-methionine-dependent methyltransferase activity. The sequence is that of Putative S-adenosyl-L-methionine-dependent methyltransferase SACE_1742 from Saccharopolyspora erythraea (strain ATCC 11635 / DSM 40517 / JCM 4748 / NBRC 13426 / NCIMB 8594 / NRRL 2338).